We begin with the raw amino-acid sequence, 361 residues long: Glyceraldehyde-3-phosphate dehydrogenase, glycosomal (361 aa).

Residues 13–14, Asp-39, Gln-92, and Ser-135 contribute to the NAD(+) site; that span reads RI. D-glyceraldehyde 3-phosphate-binding positions include 166 to 168, Thr-198, 227 to 228, and Arg-250; these read SCT and TG. Residue Cys-167 is the Nucleophile of the active site. NAD(+) is bound at residue Asn-336. The Microbody targeting signal motif lies at 359-361; that stretch reads SKM.

The protein belongs to the glyceraldehyde-3-phosphate dehydrogenase family. Homotetramer.

The protein localises to the glycosome. It carries out the reaction D-glyceraldehyde 3-phosphate + phosphate + NAD(+) = (2R)-3-phospho-glyceroyl phosphate + NADH + H(+). It participates in carbohydrate degradation; glycolysis; pyruvate from D-glyceraldehyde 3-phosphate: step 1/5. The protein is Glyceraldehyde-3-phosphate dehydrogenase, glycosomal (GAPG) of Leishmania mexicana.